The sequence spans 187 residues: Superoxide dismutase [Cu-Zn] (187 aa).

An N-terminal signal peptide occupies residues 1-21; the sequence is MSLLPTGTLILLVLFILVLIT. Positions 76, 78, and 93 each coordinate Cu cation. A disulfide bridge links Cys87 with Cys176. His93, His101, His110, and Asp113 together coordinate Zn(2+). A Cu cation-binding site is contributed by His150.

It belongs to the Cu-Zn superoxide dismutase family. Cu cation serves as cofactor. The cofactor is Zn(2+).

It carries out the reaction 2 superoxide + 2 H(+) = H2O2 + O2. Destroys radicals which are normally produced within the cells and which are toxic to biological systems. The protein is Superoxide dismutase [Cu-Zn] of Chlorella (PBCV-1).